The primary structure comprises 175 residues: MSTDTMYFNSSRLLPSAGRNKTNNLIKQKTRNNRARGNAAKNANNNNYITDIPPPQTLPNGQKPNFGHSSNKKPSFNQKKHSPPSSPSSTTTLGKKNRQNNKETPRQNNKDDTRLLSQNLKNLLLNQKQSPHGSQGIIPMGCNGSAKKLSHSYAGSTFATNGPREAKNLPKPSFL.

Positions 1–27 are enriched in polar residues; sequence MSTDTMYFNSSRLLPSAGRNKTNNLIK. Disordered stretches follow at residues 1 to 113 and 155 to 175; these read MSTD…KDDT and GSTFATNGPREAKNLPKPSFL. S2 is subject to N-acetylserine. Low complexity predominate over residues 35-47; it reads ARGNAAKNANNNN. Residues 58 to 77 show a composition bias toward polar residues; the sequence is LPNGQKPNFGHSSNKKPSFN. S82 bears the Phosphoserine mark. Residues 100–113 are compositionally biased toward basic and acidic residues; sequence NNKETPRQNNKDDT.

Belongs to the EDC family.

It localises to the cytoplasm. In terms of biological role, mRNA-binding protein which stimulates mRNA decapping by DCP1 and DCP2. Involved in the regulation of expression of multiple genes involved in glycolysis and gluconeogenesis. The chain is Enhancer of mRNA-decapping protein 1 (EDC1) from Saccharomyces cerevisiae (strain ATCC 204508 / S288c) (Baker's yeast).